The chain runs to 709 residues: Bud site selection protein 14 (709 aa).

Serine 2 bears the N-acetylserine mark. The interval aspartate 61–glutamate 258 is disordered. Polar residues-rich tracts occupy residues isoleucine 62–threonine 74 and valine 89–serine 107. Composition is skewed to basic and acidic residues over residues glutamate 111–aspartate 123 and valine 131–serine 150. The residue at position 159 (tyrosine 159) is a Phosphotyrosine. 2 positions are modified to phosphoserine: serine 160 and serine 162. Threonine 177 carries the post-translational modification Phosphothreonine. Serine 212 and serine 222 each carry phosphoserine. Residues serine 212–aspartate 226 show a composition bias toward acidic residues. Residues leucine 259–glutamate 320 form the SH3 domain. The segment at serine 334–leucine 367 is disordered. Residues serine 376, serine 378, and serine 401 each carry the phosphoserine modification. A compositionally biased stretch (acidic residues) spans aspartate 396–glycine 406. 4 disordered regions span residues aspartate 396–lysine 421, asparagine 464–aspartate 510, alanine 525–alanine 571, and alanine 600–lysine 680. Residues arginine 470–proline 504 show a composition bias toward basic and acidic residues. Serine 507 is modified (phosphoserine). Residues serine 531–asparagine 552 are compositionally biased toward polar residues. Residues glutamate 553–serine 569 show a composition bias toward low complexity. Residues alanine 600–alanine 614 are compositionally biased toward polar residues. The span at glutamate 615–glutamine 633 shows a compositional bias: basic and acidic residues. Phosphoserine is present on residues serine 655, serine 658, and serine 670. Over residues serine 655 to asparagine 671 the composition is skewed to low complexity.

As to quaternary structure, interacts with GLC7.

Functionally, important for bud site selection. Seems to be a regulatory subunit of the BUD14-GLC7 type-I phosphatase complex. The BUD14-GLC7 complex is necessary to regulate microtubule dynamics at the cortex and may function as a specific activator of the dynein complex. In Saccharomyces cerevisiae (strain ATCC 204508 / S288c) (Baker's yeast), this protein is Bud site selection protein 14 (BUD14).